The primary structure comprises 169 residues: ATP synthase subunit b, sodium ion specific (169 aa).

Residues 5–27 (SFISLDWGVVFQIVNTIVMYLIL) traverse the membrane as a helical segment.

This sequence belongs to the ATPase B chain family. As to quaternary structure, F-type ATPases have 2 components, F(1) - the catalytic core - and F(0) - the membrane proton channel. F(1) has five subunits: alpha(3), beta(3), gamma(1), delta(1), epsilon(1). F(0) has three main subunits: a(1), b(2) and c(10-14). The alpha and beta chains form an alternating ring which encloses part of the gamma chain. F(1) is attached to F(0) by a central stalk formed by the gamma and epsilon chains, while a peripheral stalk is formed by the delta and b chains.

It is found in the cell membrane. Its function is as follows. F(1)F(0) ATP synthase produces ATP from ADP in the presence of a proton or sodium gradient. F-type ATPases consist of two structural domains, F(1) containing the extramembraneous catalytic core and F(0) containing the membrane proton channel, linked together by a central stalk and a peripheral stalk. During catalysis, ATP synthesis in the catalytic domain of F(1) is coupled via a rotary mechanism of the central stalk subunits to proton translocation. Functionally, component of the F(0) channel, it forms part of the peripheral stalk, linking F(1) to F(0). In this organism this enzyme may function as an ATP-driven Na(+) ion pump to generate a Na(+) ion electrochemical gradient rather than as an ATP synthase. The protein is ATP synthase subunit b, sodium ion specific (atpF) of Clostridium paradoxum.